The primary structure comprises 468 residues: ATP synthase subunit beta (468 aa).

An ATP-binding site is contributed by Gly155–Thr162.

The protein belongs to the ATPase alpha/beta chains family. As to quaternary structure, F-type ATPases have 2 components, CF(1) - the catalytic core - and CF(0) - the membrane proton channel. CF(1) has five subunits: alpha(3), beta(3), gamma(1), delta(1), epsilon(1). CF(0) has three main subunits: a(1), b(2) and c(9-12). The alpha and beta chains form an alternating ring which encloses part of the gamma chain. CF(1) is attached to CF(0) by a central stalk formed by the gamma and epsilon chains, while a peripheral stalk is formed by the delta and b chains.

It localises to the cell membrane. The enzyme catalyses ATP + H2O + 4 H(+)(in) = ADP + phosphate + 5 H(+)(out). In terms of biological role, produces ATP from ADP in the presence of a proton gradient across the membrane. The catalytic sites are hosted primarily by the beta subunits. This is ATP synthase subunit beta from Streptococcus suis (strain 98HAH33).